Here is a 183-residue protein sequence, read N- to C-terminus: Gamma-crystallin N (183 aa).

4 consecutive Beta/gamma crystallin 'Greek key' domains span residues glycine 6–threonine 46, glycine 47–arginine 89, tyrosine 95–glycine 136, and glycine 138–valine 180.

This sequence belongs to the beta/gamma-crystallin family. In terms of assembly, monomer.

In terms of biological role, crystallins are the dominant structural components of the vertebrate eye lens. This is Gamma-crystallin N (crygn) from Xenopus tropicalis (Western clawed frog).